Reading from the N-terminus, the 146-residue chain is MPELTRRRALGAAAVVAAGVPLVALPAARADDRGHHTPEVPGNPAASGAPAAFDEIYKGRRIQGRTVTDGGGHHGGGHGGDGHGGGHHGGGYAVFVDGVELHVMRNADGSWISVVSHYEPVDTPRAAARAAVDELQGARLLPFPSN.

The tat-type signal signal peptide spans 1-30 (MPELTRRRALGAAAVVAAGVPLVALPAARA). The tract at residues 65-85 (RTVTDGGGHHGGGHGGDGHGG) is disordered. Residues 69–85 (DGGGHHGGGHGGDGHGG) are compositionally biased toward gly residues.

Belongs to the melC1 family. In terms of processing, predicted to be exported by the Tat system. The position of the signal peptide cleavage has not been experimentally proven.

Its function is as follows. This protein may function to deliver copper to tyrosinase. The sequence is that of Tyrosinase cofactor (melC1) from Streptomyces antibioticus.